The following is a 197-amino-acid chain: Negative modulator of initiation of replication (197 aa).

3 interaction with DNA regions span residues 100 to 101, 129 to 133, and 163 to 169; these read AV, RTRVY, and NTNSGRK.

Belongs to the SeqA family. As to quaternary structure, homodimer. Polymerizes to form helical filaments.

The protein resides in the cytoplasm. Its function is as follows. Negative regulator of replication initiation, which contributes to regulation of DNA replication and ensures that replication initiation occurs exactly once per chromosome per cell cycle. Binds to pairs of hemimethylated GATC sequences in the oriC region, thus preventing assembly of replication proteins and re-initiation at newly replicated origins. Repression is relieved when the region becomes fully methylated. The chain is Negative modulator of initiation of replication from Haemophilus influenzae (strain ATCC 51907 / DSM 11121 / KW20 / Rd).